A 261-amino-acid polypeptide reads, in one-letter code: Carnitinyl-CoA dehydratase (261 aa).

Catalysis depends on Glu-111, which acts as the Nucleophile. Catalysis depends on Glu-131, which acts as the Proton acceptor.

It belongs to the enoyl-CoA hydratase/isomerase family.

It catalyses the reaction (R)-carnitinyl-CoA = crotonobetainyl-CoA + H2O. The protein operates within amine and polyamine metabolism; carnitine metabolism. Catalyzes the reversible dehydration of L-carnitinyl-CoA to crotonobetainyl-CoA. This chain is Carnitinyl-CoA dehydratase, found in Salmonella paratyphi C (strain RKS4594).